The primary structure comprises 446 residues: ATP-dependent protease ATPase subunit HslU (446 aa).

ATP is bound by residues Val18, 60–65 (GVGKTE), Asp259, Glu324, and Arg396.

Belongs to the ClpX chaperone family. HslU subfamily. In terms of assembly, a double ring-shaped homohexamer of HslV is capped on each side by a ring-shaped HslU homohexamer. The assembly of the HslU/HslV complex is dependent on binding of ATP.

Its subcellular location is the cytoplasm. Its function is as follows. ATPase subunit of a proteasome-like degradation complex; this subunit has chaperone activity. The binding of ATP and its subsequent hydrolysis by HslU are essential for unfolding of protein substrates subsequently hydrolyzed by HslV. HslU recognizes the N-terminal part of its protein substrates and unfolds these before they are guided to HslV for hydrolysis. The protein is ATP-dependent protease ATPase subunit HslU of Acidovorax sp. (strain JS42).